The following is a 523-amino-acid chain: Calcium-dependent protein kinase 34 (523 aa).

Residues 1-60 (MGNCCSHGRDSDDNKEEPRPENGGGGVGAAEASVRASKHPPASPPPATKQGPIGPVLGRP) are disordered. A lipid anchor (N-myristoyl glycine) is attached at glycine 2. The segment covering 7 to 20 (HGRDSDDNKEEPRP) has biased composition (basic and acidic residues). Residues 68-326 (YTLGKELGRG…AAQVLNHPWI (259 aa)) form the Protein kinase domain. Residues 74–82 (LGRGQFGVT) and lysine 97 contribute to the ATP site. Aspartate 192 acts as the Proton acceptor in catalysis. Residue serine 232 is modified to Phosphoserine. Residues 332–362 (APDVPLDNAVMSRLKQFKAMNNFKKVALRVI) are autoinhibitory domain. 4 EF-hand domains span residues 369–404 (EEIMGLKEMFKGMDTDNSGTITLEELRQGLAKQGTR), 405–440 (LSEYEVQQLMEAADADGNGTIDYGEFIAATMHINRL), 441–476 (DREEHLYSAFQHFDKDNSGYITTEELEQALREFGMN), and 480–511 (DIKEIISEVDGDNDGRINYEEFVAMMRKGNPD). Ca(2+) is bound by residues aspartate 382, aspartate 384, serine 386, threonine 388, glutamate 393, aspartate 418, aspartate 420, asparagine 422, threonine 424, glutamate 429, aspartate 454, aspartate 456, serine 458, tyrosine 460, glutamate 465, aspartate 489, aspartate 491, aspartate 493, arginine 495, and glutamate 500.

The protein belongs to the protein kinase superfamily. Ser/Thr protein kinase family. CDPK subfamily.

Its subcellular location is the membrane. It catalyses the reaction L-seryl-[protein] + ATP = O-phospho-L-seryl-[protein] + ADP + H(+). The catalysed reaction is L-threonyl-[protein] + ATP = O-phospho-L-threonyl-[protein] + ADP + H(+). Its activity is regulated as follows. Activated by calcium. Autophosphorylation may play an important role in the regulation of the kinase activity. May play a role in signal transduction pathways that involve calcium as a second messenger. This is Calcium-dependent protein kinase 34 (CPK34) from Arabidopsis thaliana (Mouse-ear cress).